The following is a 941-amino-acid chain: Bifunctional uridylyltransferase/uridylyl-removing enzyme (941 aa).

A uridylyltransferase region spans residues 1–372 (MAKHDLSDAT…RFAHRPRRIP (372 aa)). The uridylyl-removing stretch occupies residues 373 to 728 (GTPEFIEDRG…VRTHSFHAIT (356 aa)). In terms of domain architecture, HD spans 489 to 611 (VDEHLIRSVG…VQSLDRLRML (123 aa)). ACT domains follow at residues 729 to 810 (EITV…EVIA) and 840 to 919 (VIEI…LREQ). Residues 916-941 (LREQMPSGIIAPAATKSPAAEKKARV) are disordered.

The protein belongs to the GlnD family. Mg(2+) serves as cofactor.

It catalyses the reaction [protein-PII]-L-tyrosine + UTP = [protein-PII]-uridylyl-L-tyrosine + diphosphate. The catalysed reaction is [protein-PII]-uridylyl-L-tyrosine + H2O = [protein-PII]-L-tyrosine + UMP + H(+). With respect to regulation, uridylyltransferase (UTase) activity is inhibited by glutamine, while glutamine activates uridylyl-removing (UR) activity. Modifies, by uridylylation and deuridylylation, the PII regulatory proteins (GlnB and homologs), in response to the nitrogen status of the cell that GlnD senses through the glutamine level. Under low glutamine levels, catalyzes the conversion of the PII proteins and UTP to PII-UMP and PPi, while under higher glutamine levels, GlnD hydrolyzes PII-UMP to PII and UMP (deuridylylation). Thus, controls uridylylation state and activity of the PII proteins, and plays an important role in the regulation of nitrogen assimilation and metabolism. This is Bifunctional uridylyltransferase/uridylyl-removing enzyme from Allorhizobium ampelinum (strain ATCC BAA-846 / DSM 112012 / S4) (Agrobacterium vitis (strain S4)).